The sequence spans 295 residues: 33 kDa chaperonin (295 aa).

2 cysteine pairs are disulfide-bonded: Cys-236-Cys-238 and Cys-269-Cys-272.

Belongs to the HSP33 family. Post-translationally, under oxidizing conditions two disulfide bonds are formed involving the reactive cysteines. Under reducing conditions zinc is bound to the reactive cysteines and the protein is inactive.

The protein localises to the cytoplasm. In terms of biological role, redox regulated molecular chaperone. Protects both thermally unfolding and oxidatively damaged proteins from irreversible aggregation. Plays an important role in the bacterial defense system toward oxidative stress. This is 33 kDa chaperonin from Geobacter sp. (strain M21).